The sequence spans 118 residues: Large ribosomal subunit protein bL20 (118 aa).

This sequence belongs to the bacterial ribosomal protein bL20 family.

In terms of biological role, binds directly to 23S ribosomal RNA and is necessary for the in vitro assembly process of the 50S ribosomal subunit. It is not involved in the protein synthesizing functions of that subunit. The sequence is that of Large ribosomal subunit protein bL20 from Yersinia pseudotuberculosis serotype O:1b (strain IP 31758).